The sequence spans 376 residues: Queuine tRNA-ribosyltransferase (376 aa).

Residue aspartate 93 is the Proton acceptor of the active site. Substrate-binding positions include 93–97, aspartate 147, glutamine 190, and glycine 217; that span reads DSGGF. Residues 248–254 form an RNA binding region; the sequence is GVGTPDD. Aspartate 267 serves as the catalytic Nucleophile. The interval 272-276 is RNA binding; important for wobble base 34 recognition; it reads TRSGR.

It belongs to the queuine tRNA-ribosyltransferase family. Homodimer. Within each dimer, one monomer is responsible for RNA recognition and catalysis, while the other monomer binds to the replacement base PreQ1.

It catalyses the reaction 7-aminomethyl-7-carbaguanine + guanosine(34) in tRNA = 7-aminomethyl-7-carbaguanosine(34) in tRNA + guanine. It participates in tRNA modification; tRNA-queuosine biosynthesis. Catalyzes the base-exchange of a guanine (G) residue with the queuine precursor 7-aminomethyl-7-deazaguanine (PreQ1) at position 34 (anticodon wobble position) in tRNAs with GU(N) anticodons (tRNA-Asp, -Asn, -His and -Tyr). Catalysis occurs through a double-displacement mechanism. The nucleophile active site attacks the C1' of nucleotide 34 to detach the guanine base from the RNA, forming a covalent enzyme-RNA intermediate. The proton acceptor active site deprotonates the incoming PreQ1, allowing a nucleophilic attack on the C1' of the ribose to form the product. After dissociation, two additional enzymatic reactions on the tRNA convert PreQ1 to queuine (Q), resulting in the hypermodified nucleoside queuosine (7-(((4,5-cis-dihydroxy-2-cyclopenten-1-yl)amino)methyl)-7-deazaguanosine). In Rhizobium meliloti (strain 1021) (Ensifer meliloti), this protein is Queuine tRNA-ribosyltransferase.